A 1344-amino-acid polypeptide reads, in one-letter code: MGSRVPIETIEEDGEFDWEAAVKEIDLACLKTTNASSSSSSHFTPLANPPITANLTKPPAKRQSTLDKFIGRTEHKPENHQVVSECGVNDNDNSPLVGIDPEAAKTWIYPVNGSVPLRDYQFAITKTALFSNTLVALPTGLGKTLIAAVVMYNYFRWFPQGKIVFAAPSRPLVMQQIEACHNIVGIPQEWTIDLTGQTCPSKRAFLWKSKRVFFVTPQVLEKDIQSGTCLTNYLVCLVIDEAHRALGNYSYCVVVRELMAVPIQLRILALTATPGSKTQAIQGIIDNLQISTLEYRNESDHDVCPYVHDRKLEVIEVPLGQDADDVSKRLFHVIRPYAVRLKNFGVNLNRDIQTLSPHEVLMARDKFRQAPLPGLPHVNHGDVESCFAALITLYHIRKLLSSHGIRPAYEMLEEKLKEGPFARLMSKNEDIRMTKLLMQQRLSHGAPSPKLSKMLEILVDHFKVKDPKTSRVIIFSNFRGSVRDIMNALSNIGDMVKATEFIGQSSGKTLKGQSQKIQQAVLEKFRAGGFNVIVATSIGEEGLDIMEVDLVICFDANVSPLRMIQRMGRTGRKNNGRVVVLACEGSEKNSYMRKQASGRAIKKHMRNGGTNSFNFHPSPRMIPHVYKPEVQHVEFSIKQFVPRGKKLQEEYATETPAFQKKLTPAETHMLAKYYNNPDEEKLRVSLIAFPHFQTLPSKVHKVMHSRQTGMLIDAMQHLQEPTFSEQSKSFFTEFRAPLGEREELDTGLRVTNDPKDLHSVRDLEVNTSQRKAKQVESPTSTLETTEKDYEESSPTHRYLFSSECASVDTLGNVFVMPVPLLFFPNVLESDNTPLPKTEKQHSCRNTSHIDLVPVDTSEKHRQDNISCKLKERFSPDGASETLETHSLVKRNSTRVGEDDVANSVGEIVLSSDEDDCEGLELSPRLTNFIKSGIVPESPVYDQGEANREEDLEFPQLSSPMRFSNELAGESSFPERKVQHKCNDYNIVSTTTELRTPQKEVGLANGTECLAVSPIPEDWRTPLANLTNTNSSARKDWRVSSGEKLETLRQPRKLKRLRRLGDCSSAVKENYPGITEADHIRSRSRGKKHIRGKKKMIMDDDVQVFIDEEAEVSSGAEMSADENEDVTGDSFEDSFIDDGTMPTANTQAESGKVDMMAVYRRSLLSQSPLPARFRDLAASSLSPYSAGPLTRINESRSDSDKSLSSLRTPKTTNSESNQDAMMIGNLSVVQISSDSRKRKFSLCNSANAPVINLESKFAAHAQATEKESHEGVRSNAGALEYNDDDDDAFFATLDFDAMEAQATLLLSKQRSEAKEKEDATVIPNPGMQRSDGMEKDAPSFDLGLW.

The disordered stretch occupies residues 39-61 (SSSHFTPLANPPITANLTKPPAK). In terms of domain architecture, Helicase ATP-binding spans 124-292 (ITKTALFSNT…GIIDNLQIST (169 aa)). 137-144 (LPTGLGKT) serves as a coordination point for ATP. The DEAH box motif lies at 240-243 (DEAH). Residues 450–621 (KLSKMLEILV…SFNFHPSPRM (172 aa)) enclose the Helicase C-terminal domain. Disordered stretches follow at residues 765–790 (VNTS…KDYE), 1110–1148 (EVSS…TQAE), 1183–1218 (YSAG…SNQD), and 1307–1344 (KQRS…LGLW). Residues 1118–1135 (SADENEDVTGDSFEDSFI) show a composition bias toward acidic residues. Residues 1207–1218 (TPKTTNSESNQD) are compositionally biased toward polar residues. Basic and acidic residues predominate over residues 1308–1318 (QRSEAKEKEDA).

The protein belongs to the DEAD box helicase family. DEAH subfamily. FANCM sub-subfamily.

The protein resides in the nucleus. It carries out the reaction ATP + H2O = ADP + phosphate + H(+). Its function is as follows. Involved in ordered homologous recombination (HR) events in somatic and meiotic cells. Involved in the suppression of spontaneous HR events in somatic cells. Has an opposite function to the DNA binding cofactor MHF1 which promotes spontaneous HR. Functions in replicative repair independently of MHF1 and in a parallel pathway to the endonuclease MUS81. Acts in the same pathway as the two DNA-binding cofactors MHF1 and MHF2 to restrain class II meiotic crossover (CO), and acts exclusively with MHF1 and MHF2 during meiosis to repair DNA interstrand cross-links (ICLs). This common pathway is in parallel to the pathway that involves the RECQ4A helicase. Seems to be involved in the stabilization of recombination intermediates. Involved in DNA double-strand break (DSB) repair during meiosis. Required for synthesis-dependent strand annealing (SDSA) and to a lesser extent for single-strand annealing (SSA). May process meiotic DSB repair intermediates, possibly D-loops, driving them toward noncrossover (NCO) resolution. The protein is DEAD-box ATP-dependent RNA helicase FANCM of Arabidopsis thaliana (Mouse-ear cress).